The chain runs to 237 residues: MNEENAAENESSQPKPLSATARRCLGVLVEKAKTTPDGYPLSLAGLITGCNQKSNRSPQMQVDESDALLALDELRAAGAAREIQGSGRVTKYRHAAYEWLGVDSPGAAIVTELMLRGPQTAGELRTRASRMHKFPDLDSLKTELDSLIEKGLVESLTPPGRGQTFAHCLYTPQERLYLVDKIKKQDASSAAPSQAESGSTSPAKAANDDRIDKIQERLDSVTAKLEALEKRLEFLES.

The span at 187-202 shows a compositional bias: polar residues; the sequence is ASSAAPSQAESGSTSP. Residues 187 to 211 are disordered; sequence ASSAAPSQAESGSTSPAKAANDDRI.

This sequence belongs to the UPF0502 family.

The sequence is that of UPF0502 protein RB6530 from Rhodopirellula baltica (strain DSM 10527 / NCIMB 13988 / SH1).